The primary structure comprises 62 residues: Temporin-1PLa (62 aa).

The first 22 residues, 1–22 (MFTSKKSLLLLFFLGTINLSLC), serve as a signal peptide directing secretion. A propeptide spanning residues 23–45 (EEERDADEEERRDDPDEMNVEVE) is cleaved from the precursor. Position 60 is an isoleucine amide (isoleucine 60).

Expressed by the skin glands.

It localises to the secreted. Functionally, antimicrobial activity against the Gram-positive bacterium S.aureus. The chain is Temporin-1PLa from Lithobates palustris (Pickerel frog).